Reading from the N-terminus, the 347-residue chain is Protein RecA (347 aa).

An ATP-binding site is contributed by 65–72; that stretch reads GPESSGKT. Basic and acidic residues predominate over residues 327-336; that stretch reads KFEPTELSRE. Residues 327–347 form a disordered region; sequence KFEPTELSREEGDEDTLEDAM. The segment covering 337 to 347 has biased composition (acidic residues); the sequence is EGDEDTLEDAM.

Belongs to the RecA family.

It localises to the cytoplasm. In terms of biological role, can catalyze the hydrolysis of ATP in the presence of single-stranded DNA, the ATP-dependent uptake of single-stranded DNA by duplex DNA, and the ATP-dependent hybridization of homologous single-stranded DNAs. It interacts with LexA causing its activation and leading to its autocatalytic cleavage. The protein is Protein RecA of Xylella fastidiosa (strain M12).